The primary structure comprises 303 residues: Oxygen-dependent coproporphyrinogen-III oxidase (303 aa).

Residue serine 93 participates in substrate binding. A divalent metal cation is bound by residues histidine 97 and histidine 107. Histidine 107 (proton donor) is an active-site residue. 109-111 (NVR) serves as a coordination point for substrate. Residues histidine 146 and histidine 176 each contribute to the a divalent metal cation site. Residues 241-276 (YVEFNLVYDRGTLFGLQSGGRTESILMSLPPQVRWG) are important for dimerization. Substrate is bound at residue 259-261 (GGR).

This sequence belongs to the aerobic coproporphyrinogen-III oxidase family. Homodimer. A divalent metal cation serves as cofactor.

The protein localises to the cytoplasm. It carries out the reaction coproporphyrinogen III + O2 + 2 H(+) = protoporphyrinogen IX + 2 CO2 + 2 H2O. It functions in the pathway porphyrin-containing compound metabolism; protoporphyrin-IX biosynthesis; protoporphyrinogen-IX from coproporphyrinogen-III (O2 route): step 1/1. In terms of biological role, involved in the heme biosynthesis. Catalyzes the aerobic oxidative decarboxylation of propionate groups of rings A and B of coproporphyrinogen-III to yield the vinyl groups in protoporphyrinogen-IX. This Pseudomonas putida (strain ATCC 47054 / DSM 6125 / CFBP 8728 / NCIMB 11950 / KT2440) protein is Oxygen-dependent coproporphyrinogen-III oxidase.